Reading from the N-terminus, the 228-residue chain is Delta-type opioid receptor (228 aa).

A helical membrane pass occupies residues 1–3 (GIV). Residues 4–13 (RYTKMKTATN) lie on the Cytoplasmic side of the membrane. The chain crosses the membrane as a helical span at residues 14 to 38 (IYIFNLALADALATSTLPFQSAKYL). Residues 39 to 50 (METWPFGELLCK) are Extracellular-facing. A disulfide bridge connects residues C49 and C126. Residues 51–72 (AVLSIDYYNMFTSIFTLTMMSV) form a helical membrane-spanning segment. Over 73–91 (DRYIAVCHPVKALDFRTPA) the chain is Cytoplasmic. A helical transmembrane segment spans residues 92-114 (KAKLINICIWVLASGVGVPIMVM). Topologically, residues 115–134 (AVTRPRDGAVVCMLQFPSPS) are extracellular. The chain crosses the membrane as a helical span at residues 135 to 166 (WYWDTVTKICVFLFAFVVPILVITVCYGLMLL). At 167-189 (RLRSVRLLSGSKEKDRSLRRITR) the chain is on the cytoplasmic side. A helical membrane pass occupies residues 190 to 212 (MVLVVVGAFVVCWAPIHIFVIVW). The Extracellular segment spans residues 213-227 (TLVDIDRRDPLVVAA).

Belongs to the G-protein coupled receptor 1 family. May form homooligomers. Forms a heterodimer with OPRM1. Interacts with GPRASP1. Interacts with RTP4; the interaction promotes cell surface localization of the OPRD1-OPRM1 heterodimer. Ubiquitinated. A basal ubiquitination seems not to be related to degradation. Ubiquitination is increased upon formation of OPRM1:OPRD1 oligomers leading to proteasomal degradation; the ubiquitination is diminished by RTP4. As to expression, detected in myenteric plexus and smooth muscle (at protein level). Detected in brain and intestine.

The protein localises to the cell membrane. Its function is as follows. G-protein coupled receptor that functions as a receptor for endogenous enkephalins and for a subset of other opioids. Ligand binding causes a conformation change that triggers signaling via guanine nucleotide-binding proteins (G proteins) and modulates the activity of down-stream effectors, such as adenylate cyclase. Signaling leads to the inhibition of adenylate cyclase activity. Inhibits neurotransmitter release by reducing calcium ion currents and increasing potassium ion conductance. Plays a role in the perception of pain and in opiate-mediated analgesia. Plays a role in developing analgesic tolerance to morphine. This Sus scrofa (Pig) protein is Delta-type opioid receptor (OPRD1).